Here is a 159-residue protein sequence, read N- to C-terminus: Transcriptional repressor NrdR (159 aa).

A disordered region spans residues 1–21 (MRCPKCQHNKSNVIDSRQAED). A zinc finger lies at 3 to 34 (CPKCQHNKSNVIDSRQAEDGNTIRRRRECDAC). An ATP-cone domain is found at 49–139 (LLVVKKDGTR…VYRSFKDVDE (91 aa)).

The protein belongs to the NrdR family. The cofactor is Zn(2+).

Its function is as follows. Negatively regulates transcription of bacterial ribonucleotide reductase nrd genes and operons by binding to NrdR-boxes. The chain is Transcriptional repressor NrdR from Streptococcus thermophilus (strain ATCC BAA-491 / LMD-9).